A 341-amino-acid chain; its full sequence is Basic membrane protein D (341 aa).

The N-terminal stretch at 1-16 (MLKKVYYFLIFLFIVA) is a signal peptide. Residue Cys17 is the site of N-palmitoyl cysteine attachment. Cys17 is lipidated: S-diacylglycerol cysteine.

It belongs to the BMP lipoprotein family. In terms of assembly, monomer.

The protein localises to the cell inner membrane. Functionally, binds adenosine and inosine. May be part of an ABC-type nucleoside uptake system involved in the purine salvage pathway. The protein is Basic membrane protein D of Borreliella burgdorferi (strain JD1) (Borrelia burgdorferi).